The chain runs to 333 residues: Salivary glue protein Sgs-3 (333 aa).

Positions 1 to 23 (MKLTIATALVGILLIACAHVANG) are cleaved as a signal peptide. A disordered region spans residues 51–285 (TCRPPTTTRC…ATARPTSKPC (235 aa)). Residues 60–73 (CPPPTTTRCPPPTR) are compositionally biased toward pro residues. Residues 74–88 (PAECTATTKRPTARP) are compositionally biased toward low complexity. A compositionally biased stretch (basic residues) spans 89–277 (TTKRATTRRT…TKRATTKRAT (189 aa)).

The protein is Salivary glue protein Sgs-3 (Sgs3) of Drosophila erecta (Fruit fly).